Here is a 445-residue protein sequence, read N- to C-terminus: MSTFIGQLVGFAAIVFLVWRYVVPPVRRMMAARQDTVRQQLADAATAAVRLTESTTAHSKAVEAAKAEAEQVVAEAKEEAKRITAQMQTQAGVEAERIKVQGSRQVELLRTQLTRQLRLELGHESVRQASELVRNHVSDPGQQAATVDRFLDELDAMAPAAAEVERPVAAKMRSASRRALGSLVDKFAGLAKGLDNAALSALASGLVSVAQLLQREVIVTRYLTVPAEDAAPRIRLLERLISGQVGNPALDILRAAVTERWSASSDLIDAIEHVSRQALLEVAQRDGQVDEVEDQLFRFSRILDAQPRLSILLGDYVVPAEGRVGLLRKVLDSAGSVNPIAVALLSQTVELLRGQPAEEAALLLAEVAVARRGEVVAQVSAAAELSDAQRTRVTEVLSRIYGHPVTVQLQTDPTLLGGLSIAVGDEVIDGTLSSRLTAAEAQLPD.

The interval 1 to 168 (MSTFIGQLVG…PAAAEVERPV (168 aa)) is ATP synthase subunit b. A helical transmembrane segment spans residues 4 to 24 (FIGQLVGFAAIVFLVWRYVVP). The tract at residues 169–445 (AAKMRSASRR…LTAAEAQLPD (277 aa)) is ATP synthase subunit delta.

In the N-terminal section; belongs to the ATPase B chain family. This sequence in the C-terminal section; belongs to the ATPase delta chain family. In terms of assembly, F-type ATPases have 2 components, F(1) - the catalytic core - and F(0) - the membrane proton channel. F(1) has five subunits: alpha(3), beta(3), gamma(1), delta(1), epsilon(1). F(0) has three main subunits: a(1), b(2) and c(10-14). The alpha and beta chains form an alternating ring which encloses part of the gamma chain. F(1) is attached to F(0) by a central stalk formed by the gamma and epsilon chains, while a peripheral stalk is formed by the delta and b chains.

The protein resides in the cell membrane. Its function is as follows. F(1)F(0) ATP synthase produces ATP from ADP in the presence of a proton or sodium gradient. F-type ATPases consist of two structural domains, F(1) containing the extramembraneous catalytic core and F(0) containing the membrane proton channel, linked together by a central stalk and a peripheral stalk. During catalysis, ATP synthesis in the catalytic domain of F(1) is coupled via a rotary mechanism of the central stalk subunits to proton translocation. This fusion protein includes a component of the F(0) channel (subunit b) and of the F(1) subunit (subunit delta). Two copies of subunit b and one of delta together form the peripheral 'stator' stalk which links F(1) to F(0). This Mycobacterium ulcerans (strain Agy99) protein is ATP synthase subunit b-delta (atpFH).